We begin with the raw amino-acid sequence, 79 residues long: D-alanyl carrier protein (79 aa).

The 77-residue stretch at 1–77 folds into the Carrier domain; the sequence is MSTKETVIDL…KIIQGIEELQ (77 aa). Residue Ser35 is modified to O-(pantetheine 4'-phosphoryl)serine.

The protein belongs to the DltC family. Post-translationally, 4'-phosphopantetheine is transferred from CoA to a specific serine of apo-DCP.

It is found in the cytoplasm. Its pathway is cell wall biogenesis; lipoteichoic acid biosynthesis. Its function is as follows. Carrier protein involved in the D-alanylation of lipoteichoic acid (LTA). The loading of thioester-linked D-alanine onto DltC is catalyzed by D-alanine--D-alanyl carrier protein ligase DltA. The DltC-carried D-alanyl group is further transferred to cell membrane phosphatidylglycerol (PG) by forming an ester bond, probably catalyzed by DltD. D-alanylation of LTA plays an important role in modulating the properties of the cell wall in Gram-positive bacteria, influencing the net charge of the cell wall. The polypeptide is D-alanyl carrier protein (Streptococcus equi subsp. equi (strain 4047)).